Here is a 164-residue protein sequence, read N- to C-terminus: V-type proton ATPase subunit c' (164 aa).

The Vacuolar portion of the chain corresponds to 1–14; that stretch reads MSTQLASNIYAPLY. Residues 15-37 traverse the membrane as a helical segment; the sequence is APFFGFAGCAAAMVLSCLGAAIG. Residues 38–59 are Cytoplasmic-facing; sequence TAKSGIGIAGIGTFKPELIMKS. The chain crosses the membrane as a helical span at residues 60–80; the sequence is LIPVVMSGILAIYGLVVAVLI. Residues 81 to 98 lie on the Vacuolar side of the membrane; that stretch reads AGNLSPTEDYTLFNGFMH. A helical membrane pass occupies residues 99 to 120; it reads LSCGLCVGFACLSSGYAIGMVG. The Cytoplasmic portion of the chain corresponds to 121 to 132; the sequence is DVGVRKYMHQPR. A helical membrane pass occupies residues 133–158; the sequence is LFVGIVLILIFSEVLGLYGMIVALIL. The Vacuolar segment spans residues 159–164; the sequence is NTRGSE.

It belongs to the V-ATPase proteolipid subunit family. In terms of assembly, V-ATPase is a heteromultimeric enzyme composed of a peripheral catalytic V1 complex (components A to H) attached to an integral membrane V0 proton pore complex (components: a, c, c', c'', d, e, f and VOA1). The decameric c-ring forms the proton-conducting pore, and is composed of eight proteolipid subunits c, one subunit c' and one subunit c''.

Its subcellular location is the vacuole membrane. Its function is as follows. Proton-conducting pore forming subunit of the V0 complex of vacuolar(H+)-ATPase (V-ATPase), a multisubunit enzyme composed of a peripheral complex (V1) that hydrolyzes ATP and a membrane integral complex (V0) that translocates protons. V-ATPase is responsible for acidifying and maintaining the pH of intracellular compartments. The polypeptide is V-type proton ATPase subunit c' (VMA11) (Saccharomyces cerevisiae (strain ATCC 204508 / S288c) (Baker's yeast)).